The sequence spans 174 residues: Myeloid-derived growth factor (174 aa).

An N-terminal signal peptide occupies residues Met-1–Thr-32.

This sequence belongs to the MYDGF family.

It is found in the secreted. The protein resides in the endoplasmic reticulum-Golgi intermediate compartment. It localises to the endoplasmic reticulum. Its subcellular location is the golgi apparatus. Bone marrow-derived monocyte and paracrine-acting protein that promotes cardiac myocyte survival and adaptive angiogenesis for cardiac protection and/or repair after myocardial infarction (MI). Stimulates endothelial cell proliferation through a MAPK1/3-, STAT3- and CCND1-mediated signaling pathway. Inhibits cardiac myocyte apoptosis in a PI3K/AKT-dependent signaling pathway. The polypeptide is Myeloid-derived growth factor (Bos taurus (Bovine)).